The sequence spans 598 residues: Elongation factor 4 (598 aa).

The tr-type G domain occupies 4–181 (KKIRNFAIIA…AIVNLIPPPQ (178 aa)). GTP is bound by residues 16–21 (DHGKST) and 128–131 (NKID).

This sequence belongs to the TRAFAC class translation factor GTPase superfamily. Classic translation factor GTPase family. LepA subfamily.

It localises to the cell membrane. It catalyses the reaction GTP + H2O = GDP + phosphate + H(+). Required for accurate and efficient protein synthesis under certain stress conditions. May act as a fidelity factor of the translation reaction, by catalyzing a one-codon backward translocation of tRNAs on improperly translocated ribosomes. Back-translocation proceeds from a post-translocation (POST) complex to a pre-translocation (PRE) complex, thus giving elongation factor G a second chance to translocate the tRNAs correctly. Binds to ribosomes in a GTP-dependent manner. The polypeptide is Elongation factor 4 (Mesomycoplasma hyopneumoniae (strain 232) (Mycoplasma hyopneumoniae)).